The sequence spans 184 residues: UPF0149 protein PA14_69010 (184 aa).

The protein belongs to the UPF0149 family.

The protein is UPF0149 protein PA14_69010 of Pseudomonas aeruginosa (strain UCBPP-PA14).